Reading from the N-terminus, the 1398-residue chain is MAP-homologous protein 1 (1398 aa).

The residue at position 1 (Met1) is an N-acetylmethionine. The disordered stretch occupies residues 21–77 (GWLVRPSASTSKSSRPGKSESKANSVAPDIQMDTARPPVFETSVDSSSSILSSNDKG). Over residues 27-36 (SASTSKSSRP) the composition is skewed to polar residues. A compositionally biased stretch (low complexity) spans 63 to 73 (SVDSSSSILSS). A Phosphoserine modification is found at Ser81. Disordered regions lie at residues 90-144 (NQRA…APAP), 156-186 (HRKK…GAAI), and 191-210 (TATI…PPSY). 2 stretches are compositionally biased toward polar residues: residues 91 to 102 (QRANAGSTSVPT) and 114 to 123 (VVETNLSNVE). Basic and acidic residues predominate over residues 159-186 (KDQEQQEKERERKERSPSPTHVDRGAAI). Lys221 is covalently cross-linked (Glycyl lysine isopeptide (Lys-Gly) (interchain with G-Cter in ubiquitin)). Residue Thr222 is modified to Phosphothreonine. Disordered regions lie at residues 244 to 270 (HSPE…PDPR), 296 to 382 (SSAS…PSSH), 395 to 428 (GNNN…SSME), and 515 to 548 (NPEE…NNSQ). Ser309, Ser311, Ser354, and Ser357 each carry phosphoserine. Positions 357 to 371 (SIVDTVDSNSDVSSS) are enriched in low complexity. Polar residues predominate over residues 372–381 (AQNNNQTPSS). A compositionally biased stretch (low complexity) spans 396–426 (NNNNNSTNASSLSANVNNPDTSSTSLWSSSS). A compositionally biased stretch (basic and acidic residues) spans 521 to 538 (ANAKSKEEMAPQKQNEVE). Thr577 is subject to Phosphothreonine. Over residues 605–615 (STSSLASMVSS) the composition is skewed to low complexity. Disordered stretches follow at residues 605–630 (STSS…EILP), 1148–1169 (LKSP…PNSE), and 1203–1223 (DAED…HEDV). A compositionally biased stretch (polar residues) spans 1160–1169 (GGNQAQPNSE). The segment covering 1208 to 1223 (VEFREGDDSNVNHEDV) has biased composition (basic and acidic residues). Positions 1227 to 1258 (DQQFRDEVDIKNKYSIIKRELEHEKLVGGGDL) are tau/MAP repeat-like. The interval 1313–1372 (QEETAFRTKDEQQSSQSNDSSANASPTTDPISTGSNTSRTNDNAHIPPTDAPGFDKFMNN) is disordered. Residues 1325-1337 (QSSQSNDSSANAS) are compositionally biased toward low complexity. Positions 1338 to 1355 (PTTDPISTGSNTSRTNDN) are enriched in polar residues.

It is found in the cytoplasm. Its subcellular location is the cytoskeleton. It localises to the spindle. In terms of biological role, essential for the formation and/or stabilization of microtubules. Binds to microtubules in vitro. This Saccharomyces cerevisiae (strain ATCC 204508 / S288c) (Baker's yeast) protein is MAP-homologous protein 1 (MHP1).